Reading from the N-terminus, the 278-residue chain is Putative transcription factor kapC (278 aa).

A compositionally biased stretch (pro residues) spans 1 to 10 (MQPALAPAPH). The disordered stretch occupies residues 1–121 (MQPALAPAPH…QNRAAQRAFR (121 aa)). Residues 56-68 (PTATTSPRDQNNI) are compositionally biased toward polar residues. The bZIP domain occupies 103 to 166 (PLSTSKRAAQ…EYVINLQSRL (64 aa)). A basic motif region spans residues 104–127 (LSTSKRAAQNRAAQRAFRQRKESY). Residues 109–119 (RAAQNRAAQRA) are compositionally biased toward low complexity. The tract at residues 131-162 (LEEQVKEYEVMSQEYKALQAENYQLREYVINL) is leucine-zipper. The segment at 173–278 (VPELPGNIDL…PPTHGLPMVS (106 aa)) is disordered. Residues 198-214 (PGQAGASAPPQGSPQSQ) are compositionally biased toward low complexity. Positions 215 to 226 (VSIANDDMNSLN) are enriched in polar residues. Basic and acidic residues predominate over residues 254 to 269 (GRGDETADPSETKTEP).

Belongs to the bZIP family.

The protein resides in the nucleus. Functionally, putative transcription factor. The protein is Putative transcription factor kapC (kapC) of Emericella nidulans (strain FGSC A4 / ATCC 38163 / CBS 112.46 / NRRL 194 / M139) (Aspergillus nidulans).